Here is a 465-residue protein sequence, read N- to C-terminus: Cysteine--tRNA ligase (465 aa).

Cysteine 27 lines the Zn(2+) pocket. A 'HIGH' region motif is present at residues 29–39 (PTVYDDAHLGH). Residues cysteine 207, histidine 237, and glutamate 241 each contribute to the Zn(2+) site. Residues 269–273 (KMSKS) carry the 'KMSKS' region motif. Lysine 272 contacts ATP.

It belongs to the class-I aminoacyl-tRNA synthetase family. Monomer. Zn(2+) serves as cofactor.

It is found in the cytoplasm. It carries out the reaction tRNA(Cys) + L-cysteine + ATP = L-cysteinyl-tRNA(Cys) + AMP + diphosphate. This Helicobacter pylori (strain ATCC 700392 / 26695) (Campylobacter pylori) protein is Cysteine--tRNA ligase (cysS).